Reading from the N-terminus, the 187-residue chain is Intraflagellar transport protein 22 homolog (187 aa).

GTP-binding positions include 10–17 (GPSECGKT), 65–69 (DCAGD), and 125–128 (HKPG).

It belongs to the small GTPase superfamily. Rab family.

This Danio rerio (Zebrafish) protein is Intraflagellar transport protein 22 homolog (ift22).